A 38-amino-acid polypeptide reads, in one-letter code: Photosystem II reaction center protein L (38 aa).

Residues 17 to 37 (SLYWGLLLMFVLAVLFSSYFF) traverse the membrane as a helical segment.

This sequence belongs to the PsbL family. As to quaternary structure, PSII is composed of 1 copy each of membrane proteins PsbA, PsbB, PsbC, PsbD, PsbE, PsbF, PsbH, PsbI, PsbJ, PsbK, PsbL, PsbM, PsbT, PsbX, PsbY, PsbZ, Psb30/Ycf12, at least 3 peripheral proteins of the oxygen-evolving complex and a large number of cofactors. It forms dimeric complexes.

Its subcellular location is the plastid. The protein localises to the chloroplast thylakoid membrane. Its function is as follows. One of the components of the core complex of photosystem II (PSII). PSII is a light-driven water:plastoquinone oxidoreductase that uses light energy to abstract electrons from H(2)O, generating O(2) and a proton gradient subsequently used for ATP formation. It consists of a core antenna complex that captures photons, and an electron transfer chain that converts photonic excitation into a charge separation. This subunit is found at the monomer-monomer interface and is required for correct PSII assembly and/or dimerization. This chain is Photosystem II reaction center protein L, found in Emiliania huxleyi (Coccolithophore).